Consider the following 159-residue polypeptide: C-type lectin BJcuL (159 aa).

The signal sequence occupies residues 1 to 24 (MGRFLFVASSACWFVFLSLSGAKG). Intrachain disulfides connect C27–C38, C55–C155, C62–C157, and C130–C147. The region spanning 34–156 (MNGLCYKIFN…CESKNAFLCQ (123 aa)) is the C-type lectin domain. 5 residues coordinate Ca(2+): Q120, D122, E128, N143, and D144. The Galactose-binding signature appears at 120–122 (QPD).

This sequence belongs to the true venom lectin family. Homodecamer of disulfide-linked dimers arranged in two 5-fold symmetric pentamers. Binds the gentamicin group of aminoglycoside antibiotics at the dimeric interface near the intermolecular disulfide bond. In terms of tissue distribution, expressed by the venom gland.

The protein localises to the secreted. With respect to regulation, hemagglutination activity is inhibited by lactose (MIC=2.5 mM), galactose (MIC=10 mM), and raffinose. Is very weakly or not inhibited by gentamicin, kanamycin, glucose and sucrose. Functionally, galactose-binding lectin which recognizes specific carbohydrate structures and agglutinates a variety of animal cells by binding to cell-surface glycoproteins and glycolipids. Calcium-dependent lectin. Also binds lactose and raffinose. Shows high hemagglutinating activity on mammalian erythrocytes. It also involved in immunological functions, since it is able of inducing potent neutrophil activation. In vivo, it causes edema and increases vascular permeability after injection into mouse hind paws (10-100 ug/paw). In anesthetized rats, it decreases the blood pressure by approximately 15%, with a rapid return to the resting level. Is an effective inhibitor of cell growth in some cancer cell lines, especially against renal and pancreatic cancer cell lines, human breast and ovarian carcinoma, glioblastoma and a bovine brain microvascular endothelial cell line. The sequence is that of C-type lectin BJcuL from Bothrops jararacussu (Jararacussu).